The chain runs to 227 residues: KH domain-containing protein MJ0443 (227 aa).

KH domains lie at 14–77 (KSIE…RDIV) and 106–163 (DYAS…KEAV).

This Methanocaldococcus jannaschii (strain ATCC 43067 / DSM 2661 / JAL-1 / JCM 10045 / NBRC 100440) (Methanococcus jannaschii) protein is KH domain-containing protein MJ0443.